The primary structure comprises 418 residues: Synaptotagmin-15 (418 aa).

Over 1 to 4 (MAEQ) the chain is Extracellular. Residues 5–27 (LAFLIGGIIGGLLLLIGVSCCLW) traverse the membrane as a helical; Signal-anchor for type III membrane protein segment. The Cytoplasmic segment spans residues 28 to 418 (RRFCATFTYE…WHALCRPTEP (391 aa)). C2 domains lie at 144-261 (CLGR…HRII) and 275-396 (EFGD…EHWG).

Belongs to the synaptotagmin family. As to quaternary structure, homodimer. In terms of tissue distribution, isoform 1 and isoform 2 are expressed in heart, lung, skeletal muscle and testis; not detected in brain, liver and kidney. Isoform 1 is expressed in spleen.

The protein resides in the membrane. Its function is as follows. May be involved in the trafficking and exocytosis of secretory vesicles in non-neuronal tissues. This is Synaptotagmin-15 (Syt15) from Mus musculus (Mouse).